Consider the following 302-residue polypeptide: Ribosomal protein L11 methyltransferase (302 aa).

Residues T155, G176, D198, and N239 each coordinate S-adenosyl-L-methionine.

It belongs to the methyltransferase superfamily. PrmA family.

It localises to the cytoplasm. It catalyses the reaction L-lysyl-[protein] + 3 S-adenosyl-L-methionine = N(6),N(6),N(6)-trimethyl-L-lysyl-[protein] + 3 S-adenosyl-L-homocysteine + 3 H(+). Its function is as follows. Methylates ribosomal protein L11. This is Ribosomal protein L11 methyltransferase from Caldicellulosiruptor saccharolyticus (strain ATCC 43494 / DSM 8903 / Tp8T 6331).